The following is a 314-amino-acid chain: Atrochrysone carboxyl ACP thioesterase AgnL7 (314 aa).

Zn(2+)-binding residues include His103, His105, Asp107, and His108. The active-site Proton donor/acceptor is the Asp107.

This sequence belongs to the metallo-beta-lactamase superfamily. The cofactor is Zn(2+).

It catalyses the reaction atrochrysone carboxyl-[ACP] + H2O = atrochrysone carboxylate + holo-[ACP] + H(+). It functions in the pathway secondary metabolite biosynthesis. Atrochrysone carboxyl ACP thioesterase; part of the gene cluster that mediates the biosynthesis of agnestins, dihydroxy-xanthone metabolites. The pathway begins with the assembly and cyclization of atrochrysone thioester by the non-reducing polyketide synthase Agnpks1. The atrochrysone carboxyl ACP thioesterase AgnL7 then breaks the thioester bond and releases the atrochrysone carboxylic acid as the first enzyme-free intermediate. The decarboxylase AgnL1 then catalyzes the concerted decarboxylation-elimination required to convert atochrysone carboxylic acid into emodin anthrone, which is further oxidized to emodin by the anthrone oxygenase AgnL2. Emodin then undergoes reduction catalyzed by the oxidoreductase AgnL4 to yield the dihydroquinone tautomer which is the substrate for reduction by the short chain dehydrogenase AgnL6 reduction to produce hydroxyketone, followed by AgnL8 dehydration and likely spontaneous autoxidation to chrysophanol. Baeyer-Villiger oxidation by the oxidase AgnL3 leads to monodictyphenone via cleavage of the C-10/C-10a bond of chrysophanol. Alternative cleavage at the C-4a/C-10 bond of chrysophanol also leads to the formation some cephalone F. Further conversion to agnestins A and B, requires reduction to dihydro-monodictyphenone, oxidation to agnestin C probably via an epoxide, and rearrangement to either agnestin A or agnestin B directly, although agnestin A or agnestin B can also interconvert. Within the cluster, AgnR1 is the only unassigned oxidoreductase present which could be involved in this conversion. However, AgnR1 seems not to be involved in this step, and thus genes involved in the proposed oxidation/reduction may be located elsewhere on the genome. Further agnestin A derivatives are probably formed by spontaneous decarboxylations, dehydrations and methanolysis reactions. This is Atrochrysone carboxyl ACP thioesterase AgnL7 from Paecilomyces divaricatus (Penicillium divaricatum).